A 325-amino-acid polypeptide reads, in one-letter code: Eukaryotic translation initiation factor 3 subunit I (325 aa).

WD repeat units follow at residues 8-47 (GHERSITQIKYNRDGDLLFTVAKDPVVNVWYSVNGERLGT), 50-89 (GHTGAVWCVDVDWDTRHVLSGSADNSCRLWDCETGKQLAL), 144-183 (CSESKITSAVWGPLGENIIAGHENGELNQYSAKSGEIVNS), 186-225 (EHSKQINDIQTSRDMTMFVTASKDCTSKLFDSTSLEHQKT), and 283-324 (GHFG…FEFE).

The protein belongs to the eIF-3 subunit I family. In terms of assembly, component of the eukaryotic translation initiation factor 3 (eIF-3) complex, which is composed of 13 subunits: eif3a, eif3b, eif3c, eif3d, eif3e, eif3f, eif3g, eif3h, eif3i, eif3j, eif3k, eif3l and eif3m.

The protein localises to the cytoplasm. Functionally, component of the eukaryotic translation initiation factor 3 (eIF-3) complex, which is involved in protein synthesis of a specialized repertoire of mRNAs and, together with other initiation factors, stimulates binding of mRNA and methionyl-tRNAi to the 40S ribosome. The eIF-3 complex specifically targets and initiates translation of a subset of mRNAs involved in cell proliferation. In Xenopus tropicalis (Western clawed frog), this protein is Eukaryotic translation initiation factor 3 subunit I (eif3i).